The following is a 227-amino-acid chain: uncharacterized protein (227 aa).

Helical transmembrane passes span 12–32 and 80–100; these read IVLFLIINILPILILGLYLYA and IILINGIYIGNHGSFGIKIPL.

The protein resides in the cell membrane. This is an uncharacterized protein from Methanocaldococcus jannaschii (strain ATCC 43067 / DSM 2661 / JAL-1 / JCM 10045 / NBRC 100440) (Methanococcus jannaschii).